The chain runs to 1401 residues: DNA-directed RNA polymerase subunit beta' (1401 aa).

4 residues coordinate Zn(2+): C70, C72, C85, and C88. Mg(2+)-binding residues include D460, D462, and D464. Residues C808, C882, C889, and C892 each contribute to the Zn(2+) site.

The protein belongs to the RNA polymerase beta' chain family. As to quaternary structure, the RNAP catalytic core consists of 2 alpha, 1 beta, 1 beta' and 1 omega subunit. When a sigma factor is associated with the core the holoenzyme is formed, which can initiate transcription. Mg(2+) is required as a cofactor. Requires Zn(2+) as cofactor.

The catalysed reaction is RNA(n) + a ribonucleoside 5'-triphosphate = RNA(n+1) + diphosphate. Functionally, DNA-dependent RNA polymerase catalyzes the transcription of DNA into RNA using the four ribonucleoside triphosphates as substrates. The chain is DNA-directed RNA polymerase subunit beta' from Legionella pneumophila subsp. pneumophila (strain Philadelphia 1 / ATCC 33152 / DSM 7513).